Reading from the N-terminus, the 266-residue chain is 2-C-methyl-D-erythritol 4-phosphate cytidylyltransferase (266 aa).

The tract at residues 229–266 is disordered; sequence NRDCGPGTRDPESAHPQSSVSASAFSGPGSRAPGPEEI. A compositionally biased stretch (polar residues) spans 243–252; that stretch reads HPQSSVSASA.

Belongs to the IspD/TarI cytidylyltransferase family. IspD subfamily.

The catalysed reaction is 2-C-methyl-D-erythritol 4-phosphate + CTP + H(+) = 4-CDP-2-C-methyl-D-erythritol + diphosphate. It functions in the pathway isoprenoid biosynthesis; isopentenyl diphosphate biosynthesis via DXP pathway; isopentenyl diphosphate from 1-deoxy-D-xylulose 5-phosphate: step 2/6. Its function is as follows. Catalyzes the formation of 4-diphosphocytidyl-2-C-methyl-D-erythritol from CTP and 2-C-methyl-D-erythritol 4-phosphate (MEP). This Xanthomonas axonopodis pv. citri (strain 306) protein is 2-C-methyl-D-erythritol 4-phosphate cytidylyltransferase.